We begin with the raw amino-acid sequence, 184 residues long: uncharacterized protein (184 aa).

To M.tuberculosis Rv0487.

This is an uncharacterized protein from Mycobacterium leprae (strain TN).